The chain runs to 287 residues: Bifunctional protein FolD (287 aa).

NADP(+) contacts are provided by residues 165-167 (GRS), Ser190, and Ile231.

It belongs to the tetrahydrofolate dehydrogenase/cyclohydrolase family. Homodimer.

The catalysed reaction is (6R)-5,10-methylene-5,6,7,8-tetrahydrofolate + NADP(+) = (6R)-5,10-methenyltetrahydrofolate + NADPH. The enzyme catalyses (6R)-5,10-methenyltetrahydrofolate + H2O = (6R)-10-formyltetrahydrofolate + H(+). Its pathway is one-carbon metabolism; tetrahydrofolate interconversion. Catalyzes the oxidation of 5,10-methylenetetrahydrofolate to 5,10-methenyltetrahydrofolate and then the hydrolysis of 5,10-methenyltetrahydrofolate to 10-formyltetrahydrofolate. This chain is Bifunctional protein FolD, found in Trichodesmium erythraeum (strain IMS101).